The chain runs to 207 residues: Large ribosomal subunit protein uL3 (207 aa).

The protein belongs to the universal ribosomal protein uL3 family. As to quaternary structure, part of the 50S ribosomal subunit. Forms a cluster with proteins L14 and L19.

Its function is as follows. One of the primary rRNA binding proteins, it binds directly near the 3'-end of the 23S rRNA, where it nucleates assembly of the 50S subunit. The chain is Large ribosomal subunit protein uL3 from Desulforapulum autotrophicum (strain ATCC 43914 / DSM 3382 / VKM B-1955 / HRM2) (Desulfobacterium autotrophicum).